The following is a 1871-amino-acid chain: Protein RRP5 homolog (1871 aa).

Positions 1–62 are disordered; the sequence is MANLEESFPR…KTKKLKIEKR (62 aa). Residue alanine 2 is modified to N-acetylalanine. Residue serine 7 is modified to Phosphoserine. The segment covering 43-59 has biased composition (basic residues); that stretch reads KRKKSQKGPAKTKKLKI. S1 motif domains are found at residues 83-171, 187-258, 281-346, and 365-436; these read GMRI…LSLN, GMLL…LSVG, GLVV…LSLR, and GAVL…LSLR. A Phosphoserine modification is found at serine 438. S1 motif domains lie at 453–522, 542–611, 636–707, and 729–798; these read GAVV…MTLK, GLQT…LSFK, GQLV…LCRK, and GMLL…LSLR. Residues 998-1018 form a disordered region; sequence AAKRTMRPTQKDSETVDEDEE. Lysine 1030 participates in a covalent cross-link: Glycyl lysine isopeptide (Lys-Gly) (interchain with G-Cter in SUMO1). S1 motif domains are found at residues 1036–1109, 1149–1222, 1230–1298, and 1324–1396; these read GDMV…ISHP, GQTV…LSLT, GEVA…LSLR, and GQLL…LSFL. Residues serine 1360 and serine 1362 each carry the phosphoserine modification. 2 disordered regions span residues 1395 to 1531 and 1549 to 1586; these read FLPG…APRL and ALPPLAESSDSEEDEKPHQATIKKSKKERELEKQKAEK. Residue lysine 1416 forms a Glycyl lysine isopeptide (Lys-Gly) (interchain with G-Cter in SUMO2) linkage. Basic and acidic residues-rich tracts occupy residues 1416–1459 and 1469–1484; these read KQEE…EKQQ and GGRECRESGSEQERVS. Serine 1476, serine 1493, and serine 1498 each carry phosphoserine. Basic and acidic residues predominate over residues 1575-1586; sequence KERELEKQKAEK. 4 HAT repeats span residues 1599-1631, 1705-1737, 1775-1807, and 1809-1844; these read GRQPESADDFDRLVLSSPNSSILWLQYMAFHLQ, EKFQEAGELYNRMLKRFRQEKAVWIKYGAFLLR, GDAERAKAIFENTLSTYPKRTDVWSVYIDMTIK, and GSQKDVRDIFERVIHLSLAPKRMKFFFKRYLDYEKQ.

Interacts with NF-kappa-B p50/NFKB1 and NF-kappa-B p65/RELA.

It localises to the nucleus. The protein resides in the nucleolus. Functionally, essential for the generation of mature 18S rRNA, specifically necessary for cleavages at sites A0, 1 and 2 of the 47S precursor. Directly interacts with U3 snoRNA. Involved in the biogenesis of rRNA. The polypeptide is Protein RRP5 homolog (PDCD11) (Homo sapiens (Human)).